A 683-amino-acid chain; its full sequence is Elongation factor G 1 (683 aa).

Residues 3–278 (DKMRNIGIMA…AVVDFLPAPN (276 aa)) form the tr-type G domain. Residues 12–19 (AHIDAGKT), 76–80 (DTPGH), and 130–133 (NKMD) contribute to the GTP site.

Belongs to the TRAFAC class translation factor GTPase superfamily. Classic translation factor GTPase family. EF-G/EF-2 subfamily.

The protein localises to the cytoplasm. Its function is as follows. Catalyzes the GTP-dependent ribosomal translocation step during translation elongation. During this step, the ribosome changes from the pre-translocational (PRE) to the post-translocational (POST) state as the newly formed A-site-bound peptidyl-tRNA and P-site-bound deacylated tRNA move to the P and E sites, respectively. Catalyzes the coordinated movement of the two tRNA molecules, the mRNA and conformational changes in the ribosome. In Treponema denticola (strain ATCC 35405 / DSM 14222 / CIP 103919 / JCM 8153 / KCTC 15104), this protein is Elongation factor G 1.